The sequence spans 148 residues: uncharacterized protein (148 aa).

2 CBS domains span residues 8 to 68 and 74 to 130; these read MTAD…PNSQ and MTEK…ERAG. Residues 127 to 148 are disordered; that stretch reads ERAGSALSDISEGDNREEGFFH. Residues 139–148 are compositionally biased toward basic and acidic residues; it reads GDNREEGFFH.

This is an uncharacterized protein from Bacillus subtilis (strain 168).